A 198-amino-acid chain; its full sequence is Na(+)-translocating NADH-quinone reductase subunit E (198 aa).

6 helical membrane passes run 11–31 (SVFI…FLAV), 35–55 (VSTA…SVPV), 77–97 (FLNF…LEMI), 110–130 (GIFL…SFMV), 140–160 (VVYG…LAGI), and 176–196 (LGIT…FSGV).

Belongs to the NqrDE/RnfAE family. As to quaternary structure, composed of six subunits; NqrA, NqrB, NqrC, NqrD, NqrE and NqrF.

It is found in the cell inner membrane. The enzyme catalyses a ubiquinone + n Na(+)(in) + NADH + H(+) = a ubiquinol + n Na(+)(out) + NAD(+). In terms of biological role, NQR complex catalyzes the reduction of ubiquinone-1 to ubiquinol by two successive reactions, coupled with the transport of Na(+) ions from the cytoplasm to the periplasm. NqrA to NqrE are probably involved in the second step, the conversion of ubisemiquinone to ubiquinol. The sequence is that of Na(+)-translocating NADH-quinone reductase subunit E from Histophilus somni (strain 129Pt) (Haemophilus somnus).